The following is a 503-amino-acid chain: Probable Xaa-Pro aminopeptidase TSTA_094700 (503 aa).

The Mn(2+) site is built by Asp-277, Asp-288, Glu-428, and Glu-467.

It belongs to the peptidase M24B family. It depends on Mn(2+) as a cofactor.

The catalysed reaction is Release of any N-terminal amino acid, including proline, that is linked to proline, even from a dipeptide or tripeptide.. Functionally, catalyzes the removal of a penultimate prolyl residue from the N-termini of peptides. This is Probable Xaa-Pro aminopeptidase TSTA_094700 from Talaromyces stipitatus (strain ATCC 10500 / CBS 375.48 / QM 6759 / NRRL 1006) (Penicillium stipitatum).